A 239-amino-acid polypeptide reads, in one-letter code: Endonuclease V (239 aa).

The Mg(2+) site is built by Asp50 and Asp118.

This sequence belongs to the endonuclease V family. Mg(2+) is required as a cofactor.

The protein localises to the cytoplasm. It carries out the reaction Endonucleolytic cleavage at apurinic or apyrimidinic sites to products with a 5'-phosphate.. Functionally, DNA repair enzyme involved in the repair of deaminated bases. Selectively cleaves double-stranded DNA at the second phosphodiester bond 3' to a deoxyinosine leaving behind the intact lesion on the nicked DNA. This is Endonuclease V from Xylella fastidiosa (strain 9a5c).